A 56-amino-acid polypeptide reads, in one-letter code: Small ribosomal subunit protein uS14 (56 aa).

Positions 21, 24, 39, and 42 each coordinate Zn(2+).

This sequence belongs to the universal ribosomal protein uS14 family. Component of the 40S small ribosomal subunit. Zn(2+) is required as a cofactor.

It is found in the cytoplasm. It localises to the cytosol. The protein resides in the rough endoplasmic reticulum. The protein is Small ribosomal subunit protein uS14 (RpS29) of Plutella xylostella (Diamondback moth).